The sequence spans 317 residues: uncharacterized protein (317 aa).

A run of 7 helical transmembrane segments spans residues 18 to 38, 58 to 78, 92 to 112, 130 to 150, 165 to 185, 202 to 222, and 253 to 273; these read WWII…LIII, IIFG…GFIF, FLGH…WWSV, LFAT…AFGV, QPLS…KGEL, LAFL…LSTV, and LWGG…LMVN.

The protein belongs to the CbiQ family.

The protein resides in the cell membrane. This is an uncharacterized protein from Mycoplasma pneumoniae (strain ATCC 29342 / M129 / Subtype 1) (Mycoplasmoides pneumoniae).